The sequence spans 653 residues: MATGANATPLDFPSKKRKRSRWNQDTMEQKTVIPGMPTVIPPGLTREQERAYIVQLQIEDLTRKLRTGDLGIPPNPEDRSPSPEPIYNSEGKRLNTREFRTRKKLEEERHTLITEMVALNPDFKPPADYKPPATRVSDKVMIPQDEYPEINFVGLLIGPRGNTLKNIEKECNAKIMIRGKGSVKEGKVGRKDGQMLPGEDEPLHALVTANTMENVKKAVEQIRNILKQGIETPEDQNDLRKMQLRELARLNGTLREDDNRILRPWQSSETRSITNTTVCTKCGGAGHIASDCKFQRPGDPQSAQDKARMDKEYLSLMAELGEAPVPASVGSTSGPATTPLASAPRPAAPASNPPPPSLMSTTQSRPPWMNSGPSENRPYHGMHGGGPGGPGGGPHSFPHPLPSLTGGHGGHPMQHNPNGPPPPWMQPPPPPMNQGPHPPGHHGPPPMDQYLGSTPVGSGVYRLHQGKGMMPPPPMGMMPPPPPPPSGQPPPPPSGPLPPWQQQQQQPPPPPPPSSSMASSTPLPWQQNTTTTTTSAGTGSIPPWQQQQAAAAASPGTPQMQGNPTMVPLPPGVQPPLPPGAPPPPPCSIECLLCLLSSPNSLCLSPNRAARIPPRGSDGPSHESEDFPRPLVTLPGRQPQQRPWWTGWFGKAA.

Disordered regions lie at residues 1 to 44 (MATG…PPGL) and 65 to 94 (LRTG…GKRL). Position 2 is an N-acetylalanine (Ala2). Ser14 bears the Phosphoserine mark. A Nuclear localization signal motif is present at residues 15–19 (KKRKR). Ser20 is modified (phosphoserine; by PKG). 2 positions are modified to phosphoserine: Ser80 and Ser82. A Phosphotyrosine modification is found at Tyr87. A Phosphoserine modification is found at Ser89. The KH domain maps to 141–222 (MIPQDEYPEI…ENVKKAVEQI (82 aa)). The segment at 277-296 (TVCTKCGGAGHIASDCKFQR) adopts a CCHC-type zinc-finger fold. Disordered stretches follow at residues 325–584 (VPAS…APPP) and 611–653 (RIPP…GKAA). Residues 335 to 350 (PATTPLASAPRPAAPA) are compositionally biased toward low complexity. Gly residues predominate over residues 382-394 (MHGGGPGGPGGGP). 2 stretches are compositionally biased toward pro residues: residues 418–447 (NGPP…PPPM) and 470–499 (MPPP…PLPP). Over residues 515-534 (SSMASSTPLPWQQNTTTTTT) the composition is skewed to low complexity. Pro residues predominate over residues 567-584 (VPLPPGVQPPLPPGAPPP).

Belongs to the BBP/SF1 family. As to quaternary structure, binds U2AF2. Interacts with U1 snRNA. Interacts with RBM17. Binds EWSR1, FUS and TAF15. Phosphorylation on Ser-20 interferes with U2AF2 binding and spliceosome assembly. In terms of tissue distribution, detected at intermediate levels in spleen. Lower levels in heart, kidney, brain, liver, testis, bone marrow, adrenal gland, lymph nodes, pancreas and thymus.

It is found in the nucleus. In terms of biological role, necessary for the ATP-dependent first step of spliceosome assembly. Binds to the intron branch point sequence (BPS) 5'-UACUAAC-3' of the pre-mRNA. May act as transcription repressor. The chain is Splicing factor 1 (Sf1) from Mus musculus (Mouse).